Here is a 74-residue protein sequence, read N- to C-terminus: Male-specific sperm protein Mst84Db (74 aa).

It belongs to the MST(3)CGP family. Testis.

In Drosophila melanogaster (Fruit fly), this protein is Male-specific sperm protein Mst84Db (Mst84Db).